The sequence spans 616 residues: Chaperone protein HtpG (616 aa).

The a; substrate-binding stretch occupies residues 1–334 (MAEKQIHTFQ…TADLPLNVSR (334 aa)). The interval 335-549 (EILQGNKVVD…ENEMGGNMER (215 aa)) is b. Residues 550 to 616 (IMKSLGQDVP…FVKRINKLIN (67 aa)) are c.

Belongs to the heat shock protein 90 family. As to quaternary structure, homodimer.

It is found in the cytoplasm. Its function is as follows. Molecular chaperone. Has ATPase activity. The polypeptide is Chaperone protein HtpG (Ruthia magnifica subsp. Calyptogena magnifica).